The sequence spans 561 residues: Reductase FVEG_12641 (561 aa).

Residues 1–26 are disordered; the sequence is MGVQSTANLPKETVSHLDTAPTPKPG. One can recognise an MOSC domain in the interval 52–189; the sequence is QQHDGPVFCS…ICKGDTISLL (138 aa). The region spanning 237-342 is the FAD-binding FR-type domain; it reads SAPKTYTLVD…PGSNPGAMEN (106 aa). Residues 288–289, 305–307, 313–316, and Thr-362 each bind FMN; these read FE, GVS, and RGGS. The 88-residue stretch at 474–561 folds into the 2Fe-2S ferredoxin-type domain; sequence FEVEVDEPDS…GIGRLRIEID (88 aa). Residue Cys-512 participates in [2Fe-2S] cluster binding. Ser-514 contributes to the FMN binding site. Residues Cys-517, Cys-520, and Cys-548 each coordinate [2Fe-2S] cluster.

The protein belongs to the PDR/VanB family. Monomer. FMN serves as cofactor.

Reductase; part of the Fusarium detoxification of benzoxazolinone cluster 2 (FDB2) involved in the degradation of benzoxazolinones produced by the host plant. Maize, wheat, and rye produce the 2 benzoxazinone phytoanticipins 2,4-dihy-droxy-7-methoxy-1,4-benzoxazin-3-one (DIMBOA) and 2,4-dihydroxy-1,4-benzoxazin-3-one (DIBOA) that, due to their inherent instability once released, spontaneously degrade to the more stable corresponding benzoxazolinones, 6-methoxy-2-benzoxazolinone (MBOA) and 2-benzoxazolinone (BOA), respectively. The first step in the detoxification of benzoxazolinones involves the hydrolysis of the cyclic ester bond of benzoxazolinones by the FDB1 cluster gamma-lactamase MBL1 to aminophenols. MBL1 is able to convert BOA into 2-aminophenol (2-AP), as well as MBOA into 5-methoxy-2-aminophenol (2-AMP). The FDB2 cluster N-malonyltransferase FDB2/NAT1 then metabolizes aminophenols via N-malonylation to non-toxic malonamic acids. FDB2/NAT1 converts 2-AP into N-(2-hydroxyphenyl) malonamic acid (HPMA) and 2-AMP into N-(2-hydroxy-4-methoxyphenyl) malonamic acid (HMPMA). The duplicated dienlactone hydrolases DLH1 and DLH2 may provide redundant function for hydrolyzing the lactone moiety in the BOA molecule. The roles of the amidases an other enzymes encoded by the 2 FDB clusters have not been identified so far. This chain is Reductase FVEG_12641, found in Gibberella moniliformis (strain M3125 / FGSC 7600) (Maize ear and stalk rot fungus).